The primary structure comprises 204 residues: Probable proteasome subunit beta type-3 (204 aa).

This sequence belongs to the peptidase T1B family. In terms of assembly, the 26S proteasome consists of a 20S proteasome core and two 19S regulatory subunits. The 20S proteasome core is composed of 28 subunits that are arranged in four stacked rings, resulting in a barrel-shaped structure. The two end rings are each formed by seven alpha subunits, and the two central rings are each formed by seven beta subunits. The catalytic chamber with the active sites is on the inside of the barrel.

The protein resides in the cytoplasm. The protein localises to the nucleus. Its function is as follows. Non-catalytic component of the proteasome, a multicatalytic proteinase complex which is characterized by its ability to cleave peptides with Arg, Phe, Tyr, Leu, and Glu adjacent to the leaving group at neutral or slightly basic pH. The proteasome has an ATP-dependent proteolytic activity. The chain is Probable proteasome subunit beta type-3 (pup3) from Schizosaccharomyces pombe (strain 972 / ATCC 24843) (Fission yeast).